A 412-amino-acid chain; its full sequence is Alanyl-tRNA editing protein Aarsd1 (412 aa).

Residues H109 and H113 each contribute to the Zn(2+) site. S174 carries the phosphoserine modification. The Zn(2+) site is built by C209 and H213.

Belongs to the class-II aminoacyl-tRNA synthetase family. Alax-L subfamily. Requires Zn(2+) as cofactor.

The protein resides in the cytoplasm. Its function is as follows. Functions in trans to edit the amino acid moiety from incorrectly charged tRNA(Ala). The protein is Alanyl-tRNA editing protein Aarsd1 (AARSD1) of Homo sapiens (Human).